A 366-amino-acid polypeptide reads, in one-letter code: Galactoside alpha-(1,2)-fucosyltransferase 1 (366 aa).

Residues 1–8 (MWPLSHRH) are Cytoplasmic-facing. The chain crosses the membrane as a helical; Signal-anchor for type II membrane protein span at residues 9-25 (LCLAFLLVCVLSAISFF). The Lumenal portion of the chain corresponds to 26–366 (LHIHQDSFRH…LSPLWTLAEP (341 aa)). 3 N-linked (GlcNAc...) asparagine glycosylation sites follow: Asn-66, Asn-302, and Asn-328.

The protein belongs to the glycosyltransferase 11 family.

It is found in the golgi apparatus. The protein localises to the golgi stack membrane. It catalyses the reaction a beta-D-galactosyl-(1-&gt;4)-N-acetyl-beta-D-glucosaminyl derivative + GDP-beta-L-fucose = an alpha-L-Fuc-(1-&gt;2)-beta-D-Gal-(1-&gt;4)-beta-D-GlcNAc derivative + GDP + H(+). It carries out the reaction a ganglioside GA1 + GDP-beta-L-fucose = a ganglioside Fuc-GA1 + GDP + H(+). The catalysed reaction is a beta-D-Gal-(1-&gt;3)-beta-D-GlcNAc-(1-&gt;3)-beta-D-Gal-(1-&gt;4)-beta-D-Glc-(1&lt;-&gt;1')-Cer(d18:1(4E)) + GDP-beta-L-fucose = alpha-L-fucosyl-(1-&gt;2)- beta-D-galactosyl-(1-&gt;3)-N-acetyl-beta-D-glucosaminyl-(1-&gt;3)-beta-D-galactosyl-(1-&gt;4)-beta-D-glucosyl-(1&lt;-&gt;1')-N-acylsphing-4-enine + GDP + H(+). The enzyme catalyses a neolactoside nLc4Cer(d18:1(4E)) + GDP-beta-L-fucose = a neolactoside IV(2)-alpha-Fuc-nLc4Cer(d18:1(4E)) + GDP + H(+). It catalyses the reaction a ganglioside GM1 + GDP-beta-L-fucose = a ganglioside Fuc-GM1 + GDP + H(+). It carries out the reaction beta-D-galactosyl-(1-&gt;3)-N-acetyl-D-galactosamine + GDP-beta-L-fucose = alpha-L-fucosyl-(1-&gt;2)-beta-D-galactosyl-(1-&gt;3)-N-acetyl-D-galactosamine + GDP + H(+). It functions in the pathway protein modification; protein glycosylation. Its function is as follows. Catalyzes the transfer of L-fucose, from a guanosine diphosphate-beta-L-fucose, to the terminal galactose residue of glycoconjugates through an alpha(1,2) linkage leading to H antigen synthesis that is an intermediate substrate in the synthesis of ABO blood group antigens. H antigen is essential for maturation of the glomerular layer of the main olfactory bulb, in cell migration and early cell-cell contacts during tumor associated angiogenesis. Preferentially fucosylates soluble lactose and to a lesser extent fucosylates glycolipids gangliosides GA1 and GM1a. The polypeptide is Galactoside alpha-(1,2)-fucosyltransferase 1 (Ateles belzebuth (White-bellied spider monkey)).